We begin with the raw amino-acid sequence, 381 residues long: Lipid-A-disaccharide synthase (381 aa).

It belongs to the LpxB family.

It carries out the reaction a lipid X + a UDP-2-N,3-O-bis[(3R)-3-hydroxyacyl]-alpha-D-glucosamine = a lipid A disaccharide + UDP + H(+). It participates in bacterial outer membrane biogenesis; LPS lipid A biosynthesis. Functionally, condensation of UDP-2,3-diacylglucosamine and 2,3-diacylglucosamine-1-phosphate to form lipid A disaccharide, a precursor of lipid A, a phosphorylated glycolipid that anchors the lipopolysaccharide to the outer membrane of the cell. The protein is Lipid-A-disaccharide synthase of Rickettsia bellii (strain OSU 85-389).